Here is a 352-residue protein sequence, read N- to C-terminus: Photosystem II D2 protein (352 aa).

Residues 40–60 traverse the membrane as a helical segment; the sequence is CAYMALGGWLTGTTFVTSWYT. Residue histidine 117 coordinates chlorophyll a. Residues 124 to 140 traverse the membrane as a helical segment; the sequence is GFMLRQFEIARLVGIRP. Pheophytin a is bound by residues glutamine 129 and asparagine 142. The helical transmembrane segment at 152 to 165 threads the bilayer; sequence VFVSVFLMYPLGQS. Histidine 197 is a binding site for chlorophyll a. Residues 207–227 form a helical membrane-spanning segment; sequence GALLCAIHGATVENTLFEDGD. 2 residues coordinate a plastoquinone: histidine 214 and phenylalanine 261. Histidine 214 provides a ligand contact to Fe cation. A Fe cation-binding site is contributed by histidine 268. A helical transmembrane segment spans residues 278–294; sequence GLWTSSIGIIGLALNLR.

Belongs to the reaction center PufL/M/PsbA/D family. In terms of assembly, PSII is composed of 1 copy each of membrane proteins PsbA, PsbB, PsbC, PsbD, PsbE, PsbF, PsbH, PsbI, PsbJ, PsbK, PsbL, PsbM, PsbT, PsbX, PsbY, PsbZ, Psb30/Ycf12, peripheral proteins PsbO, CyanoQ (PsbQ), PsbU, PsbV and a large number of cofactors. It forms dimeric complexes. The D1/D2 heterodimer binds P680, chlorophylls that are the primary electron donor of PSII, and subsequent electron acceptors. It shares a non-heme iron and each subunit binds pheophytin, quinone, additional chlorophylls, carotenoids and lipids. There is also a Cl(-1) ion associated with D1 and D2, which is required for oxygen evolution. The PSII complex binds additional chlorophylls, carotenoids and specific lipids. serves as cofactor.

It localises to the cellular thylakoid membrane. It carries out the reaction 2 a plastoquinone + 4 hnu + 2 H2O = 2 a plastoquinol + O2. Its function is as follows. Photosystem II (PSII) is a light-driven water:plastoquinone oxidoreductase that uses light energy to abstract electrons from H(2)O, generating O(2) and a proton gradient subsequently used for ATP formation. It consists of a core antenna complex that captures photons, and an electron transfer chain that converts photonic excitation into a charge separation. The D1/D2 (PsbA/PsbD) reaction center heterodimer binds P680, the primary electron donor of PSII as well as several subsequent electron acceptors. D2 is needed for assembly of a stable PSII complex. This Synechococcus sp. (strain RCC307) protein is Photosystem II D2 protein.